The following is a 106-amino-acid chain: MASAKIKKGDSVVVLSGKDKGKTGTVAKVMPKEGKVVVEGVNMIARHRKPSQENPQGGIDRYEAPMHIAKVAVADPKDGKPTRVRIEEKDGKKVRVAVKSGETIDG.

It belongs to the universal ribosomal protein uL24 family. As to quaternary structure, part of the 50S ribosomal subunit.

One of two assembly initiator proteins, it binds directly to the 5'-end of the 23S rRNA, where it nucleates assembly of the 50S subunit. Its function is as follows. One of the proteins that surrounds the polypeptide exit tunnel on the outside of the subunit. The polypeptide is Large ribosomal subunit protein uL24 (Erythrobacter litoralis (strain HTCC2594)).